The primary structure comprises 329 residues: Myoblast determination protein 1 homolog (329 aa).

Positions Asp160–Leu211 constitute a bHLH domain. Residues Asn256–His279 form a disordered region. The span at Tyr263–Glu273 shows a compositional bias: acidic residues.

In terms of assembly, efficient DNA binding requires dimerization with another bHLH protein. In terms of tissue distribution, body wall muscle cells; in clonal muscle precursors, in a set of early embryonic blastomeres (the ms-granddaughters), and in six glial-like cells called GLRS.

The protein localises to the nucleus. Its function is as follows. Accumulation defines the body wall muscle cell fate during embryogenesis. The polypeptide is Myoblast determination protein 1 homolog (hlh-1) (Caenorhabditis briggsae).